The primary structure comprises 340 residues: Solute carrier family 35 member G3 (340 aa).

A disordered region spans residues 11 to 33 (PDFTQPSPPSTPASLPSKHHHRC). 9 helical membrane-spanning segments follow: residues 39 to 59 (TKGL…VGPF), 69 to 89 (LPSL…ALLL), 107 to 127 (FLHA…VQVV), 160 to 180 (AWCG…PGLG), 189 to 209 (LYTA…SLGL), 223 to 243 (TVAF…LFVL), 257 to 277 (CVVA…YAVT), 283 to 303 (LVCA…YYVL), and 307 to 327 (VAPS…IITA). The region spanning 51 to 176 (LSAGFVGPFS…STLGLIIIVG (126 aa)) is the EamA 1 domain. Positions 274-327 (YAVTKAHPALVCAVLHSEVVVALMLQYYVLYETVAPSDIMGAGVVLGSIAIITA) constitute an EamA 2 domain.

The protein belongs to the SLC35G solute transporter family.

It is found in the membrane. The polypeptide is Solute carrier family 35 member G3 (Slc35g3) (Mus musculus (Mouse)).